Consider the following 1373-residue polypeptide: Inactive tyrosine-protein kinase PRAG1 (1373 aa).

Disordered stretches follow at residues 31 to 50 (AGHP…LPAR) and 197 to 235 (TSSC…DSEG). Position 238 is a phosphotyrosine (Tyr238). Basic and acidic residues-rich tracts occupy residues 250–263 (DAVH…RRGG) and 272–284 (QGPR…EEKQ). The segment at 250 to 338 (DAVHSTEGSG…SGASSPFAPH (89 aa)) is disordered. A compositionally biased stretch (low complexity) spans 317 to 333 (SSSDGLSCGSSRSGASS). A phosphotyrosine mark is found at Tyr343 and Tyr391. Disordered stretches follow at residues 376–448 (QPAS…NPAP) and 468–794 (IYLS…LPQK). Residues 419–438 (SQGQVWTGDTWIQKTPPSWS) are compositionally biased toward polar residues. Positions 506 to 522 (RESHPHNVTENTAKEKP) are enriched in basic and acidic residues. The span at 526–538 (PKLSKSSPGGSPV) shows a compositional bias: low complexity. Polar residues-rich tracts occupy residues 568-578 (NLTSSCHTNGV) and 655-670 (TSGQ…SKSA). Ser671 and Ser720 each carry phosphoserine. Composition is skewed to polar residues over residues 711–721 (VSQSSAESLSP) and 729–740 (SFTTGSTDSLAS). 2 positions are modified to phosphoserine: Ser757 and Ser802. A disordered region spans residues 804–823 (PDGFFWTQGSPKPRTASPKL). A required for homodimerization region spans residues 911 to 954 (STQLQLHSLLSSISSKEGTYAKLGGLYTQSLARLVTKCEDLFMG). One can recognise a Protein kinase domain in the interval 945–1296 (VTKCEDLFMG…EAKRVLQCLL (352 aa)). Residues 1041–1050 (LASPDTSSKD) show a composition bias toward polar residues. Disordered regions lie at residues 1041 to 1062 (LASP…PPAQ) and 1138 to 1171 (QSSP…QGGP). Positions 1139 to 1167 (SSPGPSATPTVPTTTSRCPSAAPAATTAC) are enriched in low complexity. The tract at residues 1298-1373 (GPRRELVEQP…LQSLKLLQLL (76 aa)) is required for homodimerization.

The protein belongs to the protein kinase superfamily. Homodimer. Dimerization leads to the catalytic activation of CSK. Interacts (via C-terminus) with RND2. Interacts with CSK (via SH2 domain) in a Tyr-391 phosphorylation-dependent manner; this interaction potentiates kinase activity of CSK. Interacts with NOTCH1 intracellular domain (N1ICD). Forms a complex with PRAG1, N1ICD and MAML1, in a MAML1-dependent manner. Post-translationally, phosphorylated by CSK on Tyr-238, Tyr-343, and Tyr-391; Tyr-391 is a primary site of phosphorylation.

The protein localises to the cytoplasm. Its subcellular location is the nucleus. The protein resides in the cell junction. It localises to the focal adhesion. Its function is as follows. Catalytically inactive protein kinase that acts as a scaffold protein. Functions as an effector of the small GTPase RND2, which stimulates RhoA activity and inhibits NGF-induced neurite outgrowth. Promotes Src family kinase (SFK) signaling by regulating the subcellular localization of CSK, a negative regulator of these kinases, leading to the regulation of cell morphology and motility by a CSK-dependent mechanism. Acts as a critical coactivator of Notch signaling. This chain is Inactive tyrosine-protein kinase PRAG1, found in Mus musculus (Mouse).